Consider the following 842-residue polypeptide: MYSNKSFQRRQRQQVAESRSEEKFSRSLVRLNAQSLLDSSGNNTTTKNVNSDVVIVVMEGRGSCEGHIGIALHDTCFPEIHLCEFVDSREYTTLKTMINVHEAFDIVIQNGNEERGSTKLLGEALMTAFPEASLQSISSKYFNSERGERQLQSLMNAEVSTVSEGCLRRTLALGALAVLLKYIHETRCVFFRVKSLRIKEMGVNDTCMIDFVSWESLEIVDADDASKARKFQMKQKRTLMSVLNHTVTTNGYRLLRSSVLQPSTDVYLIQSRQEAIEELIGKPQLKDKLRRTLSRAHELDRVIAMCIQTSTSWTVRESEAKINQIIKLMHTLKVIQGIRTLLHSAKMKSNILIEKTEFLKDPRFDQIMNILVEKVDDSLLDGKKNSLHLQNTKCYAIRHFVAVQLDLARQTYEEIIRNVEETGAREIAEYFHGNSSVRLSFSQSRGFHYTFVTRQAESVTIPRYFLDVFRNRTTVTFNSRKVIAYNDRLEQVVAEMFLASDVIVCDMIEEMQPMIPVLYYAMDALSSIDFLCGLATYSDLRDTCKPTFGPSFSISQGRHPILDWDDSEKTITNDTCLTRDRRFGIITGPNMAGKSTYLKQTAQLAIMAQIGCFIPANYASLPIFNRIFSRMGHNDELIRNKSAFASEMSDAAAIVQYADKNSLVVLDELARSTSTEEGIAITYAICEKVLKLQSYTFLATHFLDIAALANYSNAIDNYHFLPQTDENSTKKHKLLRGQYRGPLYGFELVELSTIPDEVIEHAQSLATELRANVEDTERDYDSERRRIKVYMNHRFRECAEYFMDTHGEKWKEEKEAIDKMKALRKYLVDELAKIDSQEQMCQ.

The disordered stretch occupies residues 1 to 21; it reads MYSNKSFQRRQRQQVAESRSE. 588 to 595 is a binding site for ATP; the sequence is GPNMAGKS.

It belongs to the DNA mismatch repair MutS family. Heterooligomer of him-14 and msh-5.

It is found in the nucleus. Its function is as follows. Required during the pachytene stage of meiotic prophase for the formation of crossovers between homologous chromosomes. Together with msh-5 and zhp-3 plays a role in the activation of DNA damage-dependent apoptosis at the DNA damage checkpoint in pachytene cells. Not needed for pairing or synapsis. May promote crossing over by interfering with Holliday junction branch migration. Has no apparent role in DNA mismatch repair. The chain is MutS protein homolog him-14 from Caenorhabditis elegans.